The primary structure comprises 163 residues: Staphylokinase (163 aa).

Positions 1 to 27 are cleaved as a signal peptide; it reads MLKRSLLFLTVLLLLFSFSSITNEVSA.

Belongs to the staphylokinase family.

The protein resides in the secreted. In terms of biological role, potent plasminogen activator that converts plasminogen into plasmin. It forms a 1:1 complex with plasmin, which in turn activates other plasminogen molecules. This is Staphylokinase (sak) from Staphylococcus phage phi13 (Bacteriophage phi-13).